A 338-amino-acid chain; its full sequence is 1-aminocyclopropane-1-carboxylate deaminase (338 aa).

At Lys51 the chain carries N6-(pyridoxal phosphate)lysine. The active-site Nucleophile is Ser78.

It belongs to the ACC deaminase/D-cysteine desulfhydrase family. In terms of assembly, homotrimer. It depends on pyridoxal 5'-phosphate as a cofactor.

It catalyses the reaction 1-aminocyclopropane-1-carboxylate + H2O = 2-oxobutanoate + NH4(+). In terms of biological role, catalyzes a cyclopropane ring-opening reaction, the irreversible conversion of 1-aminocyclopropane-1-carboxylate (ACC) to ammonia and alpha-ketobutyrate. Allows growth on ACC as a nitrogen source. The polypeptide is 1-aminocyclopropane-1-carboxylate deaminase (Acidovorax ebreus (strain TPSY) (Diaphorobacter sp. (strain TPSY))).